The sequence spans 680 residues: DNA-directed RNA polymerase subunit beta' (680 aa).

Residues Cys69, Cys71, Cys87, and Cys90 each contribute to the Zn(2+) site. Residues Asp489, Asp491, and Asp493 each contribute to the Mg(2+) site.

The protein belongs to the RNA polymerase beta' chain family. RpoC1 subfamily. In plastids the minimal PEP RNA polymerase catalytic core is composed of four subunits: alpha, beta, beta', and beta''. When a (nuclear-encoded) sigma factor is associated with the core the holoenzyme is formed, which can initiate transcription. Requires Mg(2+) as cofactor. Zn(2+) is required as a cofactor.

The protein localises to the plastid. It localises to the chloroplast. It catalyses the reaction RNA(n) + a ribonucleoside 5'-triphosphate = RNA(n+1) + diphosphate. DNA-dependent RNA polymerase catalyzes the transcription of DNA into RNA using the four ribonucleoside triphosphates as substrates. This chain is DNA-directed RNA polymerase subunit beta', found in Capsella bursa-pastoris (Shepherd's purse).